An 859-amino-acid polypeptide reads, in one-letter code: Homeobox-leucine zipper protein HOX32 (859 aa).

A disordered region spans residues 7-31 (AAVHGVGRQDRSSPGGGGAPQVDTG). The homeobox DNA-binding region spans 29-92 (DTGKYVRYTP…NRRCREKQRK (64 aa)). The stretch at 100–129 (VNRKLTAMNKLLMEENDRLQKQVSRLVYEN) forms a coiled coil. The span at 146-164 (TSCESVVTSGQHHQQQNPA) shows a compositional bias: polar residues. Residues 146–172 (TSCESVVTSGQHHQQQNPAATRPQRDA) are disordered. Residues 171 to 393 (DANNPAGLLA…LRHIRQIAHE (223 aa)) form the START domain.

Belongs to the HD-ZIP homeobox family. Class III subfamily. Expressed in seedlings, roots, stems, leaf sheaths and blades and panicles.

It is found in the nucleus. Its function is as follows. Probable transcription factor. The chain is Homeobox-leucine zipper protein HOX32 (HOX32) from Oryza sativa subsp. indica (Rice).